The following is a 220-amino-acid chain: MLSRQALLRPARVLNTQVRTYAAAAAASSKVKPPVTLFGLDGTYATALYTAAVKTSALEPTAKAISSLGNLLAKDPKLASILETPTLSPADKSAIVAELQKSVGVSNETVKNFLATLAENNRLGLLPSVVAKFSELMSAARGEVEMVVTSAQPLDNKTLNRLESAVAKSPYVGSGKKLKVTNKVNADIIGGLVVEIGERTIDLSVSSKIAKMNKLLSEAL.

Belongs to the ATPase delta chain family. F-type ATPases have 2 components, CF(1) - the catalytic core - and CF(0) - the membrane proton channel. CF(1) has five subunits: alpha(3), beta(3), gamma(1), delta(1), epsilon(1). CF(0) has three main subunits: a, b and c.

Its subcellular location is the mitochondrion. It is found in the mitochondrion inner membrane. In terms of biological role, mitochondrial membrane ATP synthase (F(1)F(0) ATP synthase or Complex V) produces ATP from ADP in the presence of a proton gradient across the membrane which is generated by electron transport complexes of the respiratory chain. F-type ATPases consist of two structural domains, F(1) - containing the extramembraneous catalytic core and F(0) - containing the membrane proton channel, linked together by a central stalk and a peripheral stalk. During catalysis, ATP synthesis in the catalytic domain of F(1) is coupled via a rotary mechanism of the central stalk subunits to proton translocation. Part of the complex F(0) domain and the peripheric stalk, which acts as a stator to hold the catalytic alpha(3)beta(3) subcomplex and subunit a/ATP6 static relative to the rotary elements. The chain is ATP synthase subunit 5, mitochondrial (atp-5) from Neurospora crassa (strain ATCC 24698 / 74-OR23-1A / CBS 708.71 / DSM 1257 / FGSC 987).